A 422-amino-acid polypeptide reads, in one-letter code: Glucose-1-phosphate adenylyltransferase 2 (422 aa).

Alpha-D-glucose 1-phosphate-binding positions include tyrosine 110, glycine 175, 190 to 191, and serine 208; that span reads EK.

Belongs to the bacterial/plant glucose-1-phosphate adenylyltransferase family. As to quaternary structure, homotetramer.

The enzyme catalyses alpha-D-glucose 1-phosphate + ATP + H(+) = ADP-alpha-D-glucose + diphosphate. The protein operates within glycan biosynthesis; glycogen biosynthesis. In terms of biological role, involved in the biosynthesis of ADP-glucose, a building block required for the elongation reactions to produce glycogen. Catalyzes the reaction between ATP and alpha-D-glucose 1-phosphate (G1P) to produce pyrophosphate and ADP-Glc. The polypeptide is Glucose-1-phosphate adenylyltransferase 2 (Alkalilimnicola ehrlichii (strain ATCC BAA-1101 / DSM 17681 / MLHE-1)).